A 279-amino-acid polypeptide reads, in one-letter code: Release factor glutamine methyltransferase (279 aa).

S-adenosyl-L-methionine-binding positions include 118–122 (GTGSG), Asp141, and Asn182. Residue 182 to 185 (NPPY) participates in substrate binding.

This sequence belongs to the protein N5-glutamine methyltransferase family. PrmC subfamily.

It carries out the reaction L-glutaminyl-[peptide chain release factor] + S-adenosyl-L-methionine = N(5)-methyl-L-glutaminyl-[peptide chain release factor] + S-adenosyl-L-homocysteine + H(+). Its function is as follows. Methylates the class 1 translation termination release factors RF1/PrfA and RF2/PrfB on the glutamine residue of the universally conserved GGQ motif. This chain is Release factor glutamine methyltransferase, found in Streptococcus pneumoniae (strain ATCC BAA-255 / R6).